A 421-amino-acid polypeptide reads, in one-letter code: 3-isopropylmalate dehydratase large subunit (421 aa).

Residues Cys-300, Cys-360, and Cys-363 each coordinate [4Fe-4S] cluster.

This sequence belongs to the aconitase/IPM isomerase family. LeuC type 2 subfamily. As to quaternary structure, heterodimer of LeuC and LeuD. The cofactor is [4Fe-4S] cluster.

It carries out the reaction (2R,3S)-3-isopropylmalate = (2S)-2-isopropylmalate. Its pathway is amino-acid biosynthesis; L-leucine biosynthesis; L-leucine from 3-methyl-2-oxobutanoate: step 2/4. In terms of biological role, catalyzes the isomerization between 2-isopropylmalate and 3-isopropylmalate, via the formation of 2-isopropylmaleate. The sequence is that of 3-isopropylmalate dehydratase large subunit from Moorella thermoacetica (strain ATCC 39073 / JCM 9320).